The sequence spans 358 residues: Probable tartrate dehydrogenase/decarboxylase TtuC' (358 aa).

Mn(2+) is bound by residues Asp222, Asp246, and Asp250.

The protein belongs to the isocitrate and isopropylmalate dehydrogenases family. The cofactor is Mg(2+). Mn(2+) serves as cofactor. It depends on K(+) as a cofactor.

Its subcellular location is the cytoplasm. It carries out the reaction tartrate + NAD(+) = 2-hydroxy-3-oxosuccinate + NADH + H(+). The enzyme catalyses (2R,3S)-tartrate + NAD(+) = 2-hydroxy-3-oxosuccinate + NADH + H(+). The catalysed reaction is (2R,3R)-tartrate + NAD(+) = 2-hydroxy-3-oxosuccinate + NADH + H(+). It catalyses the reaction (2R,3R)-tartrate + H(+) = (R)-glycerate + CO2. It carries out the reaction (R)-malate + NAD(+) = pyruvate + CO2 + NADH. Its pathway is carbohydrate acid metabolism; tartrate degradation; 2-hydroxy-3-oxosuccinate from L-tartrate: step 1/1. The protein operates within carbohydrate acid metabolism; tartrate degradation; 2-hydroxy-3-oxosuccinate from meso-tartrate: step 1/1. It participates in carbohydrate acid metabolism; tartrate degradation; D-glycerate from L-tartrate: step 1/1. Its function is as follows. Has multiple catalytic activities. Apart from catalyzing the oxidation of (+)-tartrate to oxaloglycolate, also converts meso-tartrate to D-glycerate and catalyzes the oxidative decarboxylation of D-malate to pyruvate. This chain is Probable tartrate dehydrogenase/decarboxylase TtuC' (ttuC'), found in Agrobacterium vitis (Rhizobium vitis).